The primary structure comprises 914 residues: Effector protein hopAE1 (914 aa).

Polar residues predominate over residues 1-13 (MMPSQITRSSHSS). Positions 1–31 (MMPSQITRSSHSSLPEVAPASGDAAGVSEQT) are disordered.

The protein belongs to the HopW family.

The protein localises to the secreted. In Pseudomonas syringae pv. syringae (strain B728a), this protein is Effector protein hopAE1 (hopAE1).